Reading from the N-terminus, the 359-residue chain is Maleylacetate reductase 2 (359 aa).

The protein belongs to the iron-containing alcohol dehydrogenase family. As to quaternary structure, homodimer.

It carries out the reaction 3-oxoadipate + NAD(+) = maleylacetate + NADH + H(+). It catalyses the reaction 3-oxoadipate + NADP(+) = maleylacetate + NADPH + H(+). Its pathway is aromatic compound metabolism; 3-chlorocatechol degradation. Inhibited by p-chloromercuribenzoate and by 3-oxoadipate, and, in a temperature-dependent manner, by manganese. Its function is as follows. Plays a major role in the degradation of chloroaromatic compounds by channeling maleylacetate and some of its substituted derivatives into the 3-oxoadipate pathway. This enzyme converts maleylacetate and 2-chloromaleylacetate with similar efficiencies. NADH is preferred to NADPH as the cosubstrate. The polypeptide is Maleylacetate reductase 2 (tfdFII) (Cupriavidus pinatubonensis (strain JMP 134 / LMG 1197) (Cupriavidus necator (strain JMP 134))).